A 642-amino-acid polypeptide reads, in one-letter code: Chaperone protein DnaK (642 aa).

T199 carries the phosphothreonine; by autocatalysis modification. Residues 570–585 show a composition bias toward basic and acidic residues; it reads EELEQASKDGDKEAID. The interval 570–642 is disordered; sequence EELEQASKDG…FEEVKDDDKK (73 aa). The segment covering 600 to 620 has biased composition (low complexity); it reads EAAQQQQAQQGAEGAAGGEQQ. The segment covering 627–642 has biased composition (acidic residues); the sequence is DVVDAEFEEVKDDDKK.

This sequence belongs to the heat shock protein 70 family.

In terms of biological role, acts as a chaperone. The chain is Chaperone protein DnaK from Idiomarina loihiensis (strain ATCC BAA-735 / DSM 15497 / L2-TR).